We begin with the raw amino-acid sequence, 66 residues long: MKEGIHPMYSDATVKCLCGNTFQTRSTRKEINTEICSACHPFFTGKQKLIDTAGRVERFKRRYGQV.

Cys16, Cys18, Cys36, and Cys39 together coordinate Zn(2+).

It belongs to the bacterial ribosomal protein bL31 family. Type A subfamily. In terms of assembly, part of the 50S ribosomal subunit. It depends on Zn(2+) as a cofactor.

Binds the 23S rRNA. This chain is Large ribosomal subunit protein bL31, found in Pelobacter propionicus (strain DSM 2379 / NBRC 103807 / OttBd1).